We begin with the raw amino-acid sequence, 348 residues long: Putative methylesterase 14, chloroplastic (348 aa).

Disordered regions lie at residues 1-29 (MGNKIISMMKKDSKDGGGGGSKSKRMNRS) and 60-80 (GSMSRRVGSTSTRKRTLSDPF). The transit peptide at 1–76 (MGNKIISMMK…GSTSTRKRTL (76 aa)) directs the protein to the chloroplast. Serine 77 bears the Phosphoserine mark. Serine 172 serves as the catalytic Acyl-ester intermediate. Residues aspartate 299 and histidine 327 each act as charge relay system in the active site.

The protein belongs to the AB hydrolase superfamily. Methylesterase family.

Its subcellular location is the plastid. It is found in the chloroplast. Putative methylesterase. This is Putative methylesterase 14, chloroplastic from Arabidopsis thaliana (Mouse-ear cress).